Here is a 327-residue protein sequence, read N- to C-terminus: Phenylalanine--tRNA ligase alpha subunit (327 aa).

E252 contributes to the Mg(2+) binding site.

This sequence belongs to the class-II aminoacyl-tRNA synthetase family. Phe-tRNA synthetase alpha subunit type 1 subfamily. Tetramer of two alpha and two beta subunits. The cofactor is Mg(2+).

The protein resides in the cytoplasm. It carries out the reaction tRNA(Phe) + L-phenylalanine + ATP = L-phenylalanyl-tRNA(Phe) + AMP + diphosphate + H(+). The polypeptide is Phenylalanine--tRNA ligase alpha subunit (Yersinia enterocolitica serotype O:8 / biotype 1B (strain NCTC 13174 / 8081)).